The following is a 72-amino-acid chain: Disintegrin batroxostatin (72 aa).

One can recognise a Disintegrin domain in the interval 1–72 (EAGEECDCGA…SADCPRNRFY (72 aa)). 6 disulfides stabilise this stretch: Cys6-Cys21, Cys8-Cys16, Cys15-Cys38, Cys29-Cys35, Cys34-Cys59, and Cys47-Cys66. The Cell attachment site signature appears at 51-53 (RGD). Positions 52–72 (GDNPDDRCTGQSADCPRNRFY) are disordered.

Belongs to the venom metalloproteinase (M12B) family. P-II subfamily. P-IIa sub-subfamily. Monomer. In terms of tissue distribution, expressed by the venom gland.

It is found in the secreted. Its function is as follows. Inhibits fibrinogen interaction with platelets. Acts by binding to the glycoprotein IIb-IIIa receptor (ITGA2B/ITGB3) on the platelet surface and inhibits aggregation induced by ADP, thrombin, platelet-activating factor and collagen. Also inhibits T24 and SK-Mel-28 cell adhesion to fibronectin with IC(50) of 4.4 uM and 33 nM, respectively. In Bothrops atrox (Barba amarilla), this protein is Disintegrin batroxostatin.